Here is a 462-residue protein sequence, read N- to C-terminus: Probable Xaa-Pro aminopeptidase pepP (462 aa).

Asp-259, Asp-270, Glu-393, and Glu-433 together coordinate Mn(2+).

It belongs to the peptidase M24B family. Mn(2+) is required as a cofactor.

It carries out the reaction Release of any N-terminal amino acid, including proline, that is linked to proline, even from a dipeptide or tripeptide.. Catalyzes the removal of a penultimate prolyl residue from the N-termini of peptides. This chain is Probable Xaa-Pro aminopeptidase pepP (pepP), found in Metarhizium robertsii (strain ARSEF 23 / ATCC MYA-3075) (Metarhizium anisopliae (strain ARSEF 23)).